Here is a 155-residue protein sequence, read N- to C-terminus: SsrA-binding protein (155 aa).

This sequence belongs to the SmpB family.

The protein resides in the cytoplasm. In terms of biological role, required for rescue of stalled ribosomes mediated by trans-translation. Binds to transfer-messenger RNA (tmRNA), required for stable association of tmRNA with ribosomes. tmRNA and SmpB together mimic tRNA shape, replacing the anticodon stem-loop with SmpB. tmRNA is encoded by the ssrA gene; the 2 termini fold to resemble tRNA(Ala) and it encodes a 'tag peptide', a short internal open reading frame. During trans-translation Ala-aminoacylated tmRNA acts like a tRNA, entering the A-site of stalled ribosomes, displacing the stalled mRNA. The ribosome then switches to translate the ORF on the tmRNA; the nascent peptide is terminated with the 'tag peptide' encoded by the tmRNA and targeted for degradation. The ribosome is freed to recommence translation, which seems to be the essential function of trans-translation. The sequence is that of SsrA-binding protein from Streptococcus agalactiae serotype Ia (strain ATCC 27591 / A909 / CDC SS700).